A 326-amino-acid polypeptide reads, in one-letter code: Probable cell division protein WhiA (326 aa).

The segment at residues 275–308 (SLDELGHHADPPMTKDAVAGRIRRLLAMADKKAV) is a DNA-binding region (H-T-H motif).

Belongs to the WhiA family.

Involved in cell division and chromosome segregation. This Clavibacter sepedonicus (Clavibacter michiganensis subsp. sepedonicus) protein is Probable cell division protein WhiA.